The sequence spans 33 residues: Photosystem II reaction center protein T (33 aa).

The helical transmembrane segment at 3-23 threads the bilayer; it reads ALVYTFLLVSTLGILFFSIFF.

The protein belongs to the PsbT family. In terms of assembly, PSII is composed of 1 copy each of membrane proteins PsbA, PsbB, PsbC, PsbD, PsbE, PsbF, PsbH, PsbI, PsbJ, PsbK, PsbL, PsbM, PsbT, PsbY, PsbZ, Psb30/Ycf12, at least 3 peripheral proteins of the oxygen-evolving complex and a large number of cofactors. It forms dimeric complexes.

It localises to the plastid. The protein resides in the chloroplast thylakoid membrane. Found at the monomer-monomer interface of the photosystem II (PS II) dimer, plays a role in assembly and dimerization of PSII. PSII is a light-driven water plastoquinone oxidoreductase, using light energy to abstract electrons from H(2)O, generating a proton gradient subsequently used for ATP formation. This chain is Photosystem II reaction center protein T, found in Pelargonium hortorum (Common geranium).